Consider the following 350-residue polypeptide: MSKRKLTQNQQRRIQSNNAKTLHRHQHRHKSDIDWQDDMLGDFQDGTVVTRYAVHADVENEQGEIVRCNLRRTLKSVVVGDRVVWRKGKEQLQGVRGVIEAVQPRHNQIVRPDYYDGLKSIAANIDRIIIVSAVLPNLSLNIIDRYLVVCESSNIPAVIVVNKADLLSSEARTEVSLQLEIYQKIGYETLLISAKSGENMDKLTALLSEGTSIFVGQSGVGKSSLINYILPEVNAQTGKLSQVSGLGQHTTTSSRLYHLSQGGNLIDSPGIREFGLWHLDREQITNGYREFQYFLGTCKFRDCKHLHDPGCAIQLAVKEGKIDPLRFENYHRLITSLSETKSQRHFISAN.

Residues Met-1–Lys-30 form a disordered region. Residues Thr-7 to Lys-20 are compositionally biased toward polar residues. Over residues Thr-21 to Lys-30 the composition is skewed to basic residues. The region spanning His-106–Phe-274 is the CP-type G domain. GTP contacts are provided by residues Asn-162–Asp-165 and Gly-216–Ser-224. Residues Cys-298, Cys-303, His-305, and Cys-311 each contribute to the Zn(2+) site.

This sequence belongs to the TRAFAC class YlqF/YawG GTPase family. RsgA subfamily. Monomer. Associates with 30S ribosomal subunit, binds 16S rRNA. It depends on Zn(2+) as a cofactor.

Its subcellular location is the cytoplasm. Its function is as follows. One of several proteins that assist in the late maturation steps of the functional core of the 30S ribosomal subunit. Helps release RbfA from mature subunits. May play a role in the assembly of ribosomal proteins into the subunit. Circularly permuted GTPase that catalyzes slow GTP hydrolysis, GTPase activity is stimulated by the 30S ribosomal subunit. This is Small ribosomal subunit biogenesis GTPase RsgA from Histophilus somni (strain 129Pt) (Haemophilus somnus).